The primary structure comprises 1433 residues: DNA-directed RNA polymerase subunit beta' (1433 aa).

Residues Cys66, Cys68, Cys81, and Cys84 each contribute to the Zn(2+) site. The interval 328–347 is disordered; that stretch reads RKSSAVKTDSNRPLKSLSDS. Residues 329–346 are compositionally biased toward polar residues; sequence KSSAVKTDSNRPLKSLSD. Residues Asp477, Asp479, and Asp481 each coordinate Mg(2+). Zn(2+)-binding residues include Cys825, Cys899, Cys906, and Cys909.

It belongs to the RNA polymerase beta' chain family. As to quaternary structure, the RNAP catalytic core consists of 2 alpha, 1 beta, 1 beta' and 1 omega subunit. When a sigma factor is associated with the core the holoenzyme is formed, which can initiate transcription. Mg(2+) serves as cofactor. The cofactor is Zn(2+).

It carries out the reaction RNA(n) + a ribonucleoside 5'-triphosphate = RNA(n+1) + diphosphate. In terms of biological role, DNA-dependent RNA polymerase catalyzes the transcription of DNA into RNA using the four ribonucleoside triphosphates as substrates. The sequence is that of DNA-directed RNA polymerase subunit beta' from Christiangramia forsetii (strain DSM 17595 / CGMCC 1.15422 / KT0803) (Gramella forsetii).